Here is a 250-residue protein sequence, read N- to C-terminus: MARLILLRHGQSAWNLENRFTGWTDVDLSPAGEAEALAAARLIRDEGLDFSVCHTSMLTRAIRTLHLVQHELDRLWTPVRKHWRLNERHYGALQGLDKRETAARHGEDQVFVWRRSYDVPPPVIAPDDPKHPVHDPRYADVPPDVLPCGESLEATVARVLPYWYDAIAPDLMAGRDVLVAAHGNSLRALVMHLDGLDREAVSRLDIPTGLPRLYELDAALRPVSYRYLGDPAEAEERARAVAAQGRLEKN.

Substrate-binding positions include 8 to 15 (RHGQSAWN), 21 to 22 (TG), Arg-60, 87 to 90 (ERHY), Lys-98, 114 to 115 (RR), and 183 to 184 (GN). The active-site Tele-phosphohistidine intermediate is the His-9. Glu-87 acts as the Proton donor/acceptor in catalysis.

It belongs to the phosphoglycerate mutase family. BPG-dependent PGAM subfamily. As to quaternary structure, homodimer.

It carries out the reaction (2R)-2-phosphoglycerate = (2R)-3-phosphoglycerate. The protein operates within carbohydrate degradation; glycolysis; pyruvate from D-glyceraldehyde 3-phosphate: step 3/5. In terms of biological role, catalyzes the interconversion of 2-phosphoglycerate and 3-phosphoglycerate. This chain is 2,3-bisphosphoglycerate-dependent phosphoglycerate mutase, found in Nitratidesulfovibrio vulgaris (strain DP4) (Desulfovibrio vulgaris).